Consider the following 37-residue polypeptide: Large ribosomal subunit protein bL36 (37 aa).

The protein belongs to the bacterial ribosomal protein bL36 family.

The protein is Large ribosomal subunit protein bL36 of Synechococcus sp. (strain CC9311).